Consider the following 53-residue polypeptide: Weak toxin NWT (53 aa).

3 disulfide bridges follow: cysteine 6-cysteine 11, cysteine 17-cysteine 33, and cysteine 37-cysteine 48.

This sequence belongs to the three-finger toxin family. Ancestral subfamily. Orphan group II sub-subfamily. As to expression, expressed by the venom gland.

It localises to the secreted. Functionally, binds with low affinity and weakly inhibits muscle nicotinic acetylcholine receptor (nAChR). The sequence is that of Weak toxin NWT from Naja kaouthia (Monocled cobra).